We begin with the raw amino-acid sequence, 508 residues long: Protein adenylyltransferase Fic (508 aa).

A helical membrane pass occupies residues 48–70 (FYRFALFFIAGSFAAFSFHALTS). TPR repeat units lie at residues 132–165 (ALGA…APKH) and 166–200 (PEVL…CPSN). Positions 257–262 (SVGIEG) match the Inhibitory (S/T)XXXE(G/N) motif motif. ATP-binding positions include glutamate 261 and 342 to 345 (VGGH). Residues 311–446 (ITIKDILELH…IRPFVRFIAD (136 aa)) enclose the Fido domain. Histidine 389 is an active-site residue. ATP-binding positions include 393 to 400 (DGNGRTSR), 425 to 426 (YY), and asparagine 433.

Belongs to the fic family. Homodimer.

Its subcellular location is the membrane. The enzyme catalyses L-tyrosyl-[protein] + ATP = O-(5'-adenylyl)-L-tyrosyl-[protein] + diphosphate. It catalyses the reaction L-threonyl-[protein] + ATP = 3-O-(5'-adenylyl)-L-threonyl-[protein] + diphosphate. The catalysed reaction is 3-O-(5'-adenylyl)-L-threonyl-[protein] + H2O = L-threonyl-[protein] + AMP + H(+). The side chain of Glu-261 determines which of the two opposing activities (AMPylase or de-AMPylase) will take place. In response to endoplasmic reticulum stress, mediates de-AMPylase activity. Adenylyltransferase activity is inhibited by the inhibitory helix present at the N-terminus: Glu-261 binds ATP and competes with ATP-binding at Arg-400, thereby preventing adenylyltransferase activity. In unstressed cells, disengagement of Glu-261 promotes adenylyltransferase activity. Activation dissociates ATP-binding from Glu-261, allowing ordered binding of the entire ATP moiety with the alpha-phosphate in an orientation that is productive for accepting an incoming target hydroxyl side chain. In terms of biological role, protein that can both mediate the addition of adenosine 5'-monophosphate (AMP) to specific residues of target proteins (AMPylation), and the removal of the same modification from target proteins (de-AMPylation), depending on the context. The side chain of Glu-261 determines which of the two opposing activities (AMPylase or de-AMPylase) will take place. Acts as a key regulator of the unfolded protein response (UPR) by mediating AMPylation or de-AMPylation of Hsc70-3/BiP. In unstressed cells, acts as an adenylyltransferase by mediating AMPylation of Hsc70-3/BiP at 'Thr-518', thereby inactivating it. In response to endoplasmic reticulum stress, acts as a phosphodiesterase by mediating removal of ATP (de-AMPylation) from Hsc70-3/BiP at 'Thr-518', leading to restore HSPA5/BiP activity. This Drosophila persimilis (Fruit fly) protein is Protein adenylyltransferase Fic.